We begin with the raw amino-acid sequence, 122 residues long: Large ribosomal subunit protein uL14 (122 aa).

It belongs to the universal ribosomal protein uL14 family. Part of the 50S ribosomal subunit. Forms a cluster with proteins L3 and L19. In the 70S ribosome, L14 and L19 interact and together make contacts with the 16S rRNA in bridges B5 and B8.

Functionally, binds to 23S rRNA. Forms part of two intersubunit bridges in the 70S ribosome. The sequence is that of Large ribosomal subunit protein uL14 from Neisseria meningitidis serogroup C (strain 053442).